The following is a 156-amino-acid chain: Small ribosomal subunit protein uS7 (156 aa).

This sequence belongs to the universal ribosomal protein uS7 family. Part of the 30S ribosomal subunit. Contacts proteins S9 and S11.

Its function is as follows. One of the primary rRNA binding proteins, it binds directly to 16S rRNA where it nucleates assembly of the head domain of the 30S subunit. Is located at the subunit interface close to the decoding center, probably blocks exit of the E-site tRNA. In Streptococcus sanguinis (strain SK36), this protein is Small ribosomal subunit protein uS7.